The following is a 287-amino-acid chain: ATP synthase gamma chain (287 aa).

This sequence belongs to the ATPase gamma chain family. F-type ATPases have 2 components, CF(1) - the catalytic core - and CF(0) - the membrane proton channel. CF(1) has five subunits: alpha(3), beta(3), gamma(1), delta(1), epsilon(1). CF(0) has three main subunits: a, b and c.

The protein localises to the cell inner membrane. Produces ATP from ADP in the presence of a proton gradient across the membrane. The gamma chain is believed to be important in regulating ATPase activity and the flow of protons through the CF(0) complex. This chain is ATP synthase gamma chain, found in Geotalea daltonii (strain DSM 22248 / JCM 15807 / FRC-32) (Geobacter daltonii).